A 592-amino-acid chain; its full sequence is Aspartate--tRNA(Asp/Asn) ligase (592 aa).

Glu175 is a binding site for L-aspartate. The segment at 199–202 is aspartate; the sequence is QLFK. Residue Arg221 participates in L-aspartate binding. ATP-binding positions include 221 to 223 and Gln230; that span reads RDE. An L-aspartate-binding site is contributed by His450. Glu483 provides a ligand contact to ATP. An L-aspartate-binding site is contributed by Arg490. 535–538 serves as a coordination point for ATP; the sequence is GLDR.

Belongs to the class-II aminoacyl-tRNA synthetase family. Type 1 subfamily. Homodimer.

It localises to the cytoplasm. It catalyses the reaction tRNA(Asx) + L-aspartate + ATP = L-aspartyl-tRNA(Asx) + AMP + diphosphate. Aspartyl-tRNA synthetase with relaxed tRNA specificity since it is able to aspartylate not only its cognate tRNA(Asp) but also tRNA(Asn). Reaction proceeds in two steps: L-aspartate is first activated by ATP to form Asp-AMP and then transferred to the acceptor end of tRNA(Asp/Asn). The chain is Aspartate--tRNA(Asp/Asn) ligase from Acinetobacter baylyi (strain ATCC 33305 / BD413 / ADP1).